A 350-amino-acid chain; its full sequence is D-alanine--D-alanine ligase (350 aa).

The ATP-grasp domain occupies 135-335 (KLYAKNLGVK…LAQSLPKTPK (201 aa)). 164–219 (KPSFNFPFIVKPNNAGSSLGVSVVKEEKELAYALDGAFEYSKEVLIEPFIQRVKEY) is a binding site for ATP. Mg(2+)-binding residues include aspartate 291, glutamate 303, and asparagine 305.

The protein belongs to the D-alanine--D-alanine ligase family. The cofactor is Mg(2+). Mn(2+) is required as a cofactor.

Its subcellular location is the cytoplasm. It catalyses the reaction 2 D-alanine + ATP = D-alanyl-D-alanine + ADP + phosphate + H(+). It participates in cell wall biogenesis; peptidoglycan biosynthesis. Its function is as follows. Cell wall formation. This is D-alanine--D-alanine ligase from Helicobacter acinonychis (strain Sheeba).